A 631-amino-acid polypeptide reads, in one-letter code: ESX-3 secretion system protein EccA3 (631 aa).

385 to 392 (GPPGTGKT) lines the ATP pocket.

It belongs to the CbxX/CfxQ family. As to quaternary structure, part of the ESX-3 / type VII secretion system (T7SS), which is composed of cytosolic and membrane components.

It is found in the cytoplasm. Functionally, part of the ESX-3 specialized secretion system, which is important for iron and zinc uptake or homeostasis. EccA3 exhibits ATPase activity and may provide energy for the export of ESX-3 substrates. The polypeptide is ESX-3 secretion system protein EccA3 (Mycobacterium tuberculosis (strain CDC 1551 / Oshkosh)).